The primary structure comprises 296 residues: 4-hydroxybenzoate octaprenyltransferase (296 aa).

The next 8 membrane-spanning stretches (helical) occupy residues 28–48 (PIGI…AGNG), 55–75 (VLIF…INDF), 102–122 (AVML…CTNA), 145–167 (TYYP…FTAA), 174–196 (SAWL…YAMV), 219–239 (VIIL…GNRF), 241–261 (LGGW…WEFW), and 275–295 (FLHN…DYAL).

The protein belongs to the UbiA prenyltransferase family. Mg(2+) serves as cofactor.

It localises to the cell inner membrane. It carries out the reaction all-trans-octaprenyl diphosphate + 4-hydroxybenzoate = 4-hydroxy-3-(all-trans-octaprenyl)benzoate + diphosphate. It functions in the pathway cofactor biosynthesis; ubiquinone biosynthesis. Its function is as follows. Catalyzes the prenylation of para-hydroxybenzoate (PHB) with an all-trans polyprenyl group. Mediates the second step in the final reaction sequence of ubiquinone-8 (UQ-8) biosynthesis, which is the condensation of the polyisoprenoid side chain with PHB, generating the first membrane-bound Q intermediate 3-octaprenyl-4-hydroxybenzoate. The sequence is that of 4-hydroxybenzoate octaprenyltransferase from Pseudomonas entomophila (strain L48).